A 205-amino-acid polypeptide reads, in one-letter code: uncharacterized protein (205 aa).

The disordered stretch occupies residues 1–42; that stretch reads MSRKRDKPYTNRHTPARISKRRRPWAPSSSEHDEIIDKPITK. The span at 14–24 shows a compositional bias: basic residues; the sequence is TPARISKRRRP. Positions 30–40 are enriched in basic and acidic residues; that stretch reads SEHDEIIDKPI. One can recognise an RRM domain in the interval 47–122; that stretch reads PALVVMGLPA…KKLEVVWATD (76 aa). The disordered stretch occupies residues 170–191; the sequence is PRSDNTKGISGDGGISSPATTS.

This is an uncharacterized protein from Arabidopsis thaliana (Mouse-ear cress).